The following is a 946-amino-acid chain: MIMHGTWYKGPQLAHHPHSNPHNSSHGHSDYHQFRSYPSFVVTPYHDGHVQGPATPTPCTAPPTPCNGPVPVSVPVSIPVCHTGGQGSPVIVESSFAIAAAAAAAAAAVAVGGSSATPLLPSPPIKIEQVFGEPSSLGAVVEDYALGLDCPVEHTFRKPHNNNGYSWSTGNNNEVVSHSSNGHTNNHPTTPPTPPNEASATQATSVSAINLNQAQPASQTRSNFGSSIKSPPSEPDAVTAATCKSQENNSGQNPTPNSLSDHNPAHNLNSNSTAAAVAAAAAAAAAANMPIGGVQGQNPTQGLVHWMSAVMAEHMTGQTHHDPGAVGMHYMWNGNVDHAKDISDYNLWPPTPRSHQHASEHHPMSLKQEYEAKMNDHHHNNLQKGHFLDDNRLEHHAVTGQGGLGLGASNGVGGGGGGASVVGNSSLGASSHHAVAAAHHHNQAVAAASAAALLVVPQPINASKMGGPGGVSSVAGGHATGGGSGRKYQCKMCPQIFSSKADLQLHTQIHMREAKPYKCTQCSKAFANSSYLSQHTRIHLGIKPYRCEICQRKFTQLSHLQQHIRTHTGDKPYKCRHPGCQKAFSQLSNLQSHSRCHQTDKPFKCNSCYKCFSDEPSLLEHIPKHKESKHLKTHICQYCGKSYTQETYLTKHMQKHAERTDKRPPIVPGSAAAIAAAAAAAAGGSANPANGPPPPPNPAQHQRNNLGLPPVSIAPSDNGYWPKVSPDSAAAANAMEVMHQQQQQQQQQQQQQQQQQQQQQQQAHHHHPQHGVPPQQHVPPQQQQQQQQQQQHHHPQQQPPPQHSMEAHYAQPTAPNGSQSNGHGAELQPHHRMPDPVREDIASTPSAVGPYDAASITKTTSNSAFTPINSMPPHLNSLSHHPMAQRPYLYDAISFPNKNVNQNNANAFPNQLISLHQIRNYAHQPAGLMAGEHLLGVSVGPGKDKG.

2 disordered regions span residues 10–30 (GPQL…GHSD) and 156–269 (FRKP…HNLN). Polar residues predominate over residues 161–176 (NNNGYSWSTGNNNEVV). Low complexity predominate over residues 177 to 188 (SHSSNGHTNNHP). 2 stretches are compositionally biased toward polar residues: residues 198-230 (ASAT…SIKS) and 242-269 (TCKS…HNLN). 6 consecutive C2H2-type zinc fingers follow at residues 488 to 510 (YQCK…TQIH), 517 to 539 (YKCT…TRIH), 545 to 567 (YRCE…IRTH), 573 to 597 (YKCR…SRCH), 603 to 625 (FKCN…IPKH), and 634 to 656 (HICQ…MQKH). Residues 683-853 (GGSANPANGP…TPSAVGPYDA (171 aa)) are disordered. Low complexity-rich tracts occupy residues 739–762 (HQQQ…QQQQ) and 770–790 (HGVP…QQQQ). A compositionally biased stretch (polar residues) spans 813 to 822 (TAPNGSQSNG). The span at 828-841 (QPHHRMPDPVREDI) shows a compositional bias: basic and acidic residues.

The protein belongs to the krueppel C2H2-type zinc-finger protein family. Interacts with nab; which acts as a corepressor. As to expression, isoform rn and isoform roe are expressed in non-overlapping domains in the larval imaginal disks. Isoform rn is first expressed during the early third larval instar in the leg, wing, haltere and antennal part of the eye-antennal imaginal disk. It is observed as a ring in the leg and antenna disks and in the presumptive wing pouch and capitellum of wing and haltere disks respectively. In wing disk it is expressed in 3 concentric domains in the wing pouch. In late third instar, expression of isoform rn in the leg disk is no longer evident, but is maintained in the other disks. Isoform roe appears in the third instar and is confined to the eye part of the eye-antennal imaginal disk in a band of 4-6 cells at the morphogenetic furrow. There is no evidence of roe expression in other imaginal disks.

The protein localises to the nucleus. Transcription factor involved in imaginal disks development. Isoform rn is required in the wings, antenna, haltere, proboscis and legs disks, while isoform roe is required in the eye disk. Together with nab corepressor, it is involved in the initiation and maintenance of wingless (wg) expression in the wing hinge, by limiting the expression of wg to this compartment. Also required for the epithelial-mesenchymal transition branch of basolateral junctions signaling. This Drosophila melanogaster (Fruit fly) protein is Zinc finger protein rotund.